Here is a 357-residue protein sequence, read N- to C-terminus: D-alanine--D-alanine ligase (357 aa).

In terms of domain architecture, ATP-grasp spans 134–339 (KQLFEHRGLP…YPDLIAKLID (206 aa)). 167–222 (NDKLTYPVFVKPANLGSSVGISKCNNEEELKSGIAEAFQFDRKLVIEQGINAREIE) lines the ATP pocket. Aspartate 293, glutamate 306, and asparagine 308 together coordinate Mg(2+).

This sequence belongs to the D-alanine--D-alanine ligase family. Mg(2+) serves as cofactor. The cofactor is Mn(2+).

The protein localises to the cytoplasm. The catalysed reaction is 2 D-alanine + ATP = D-alanyl-D-alanine + ADP + phosphate + H(+). The protein operates within cell wall biogenesis; peptidoglycan biosynthesis. In terms of biological role, cell wall formation. The chain is D-alanine--D-alanine ligase from Staphylococcus epidermidis (strain ATCC 35984 / DSM 28319 / BCRC 17069 / CCUG 31568 / BM 3577 / RP62A).